The chain runs to 81 residues: MRLFLSLLVVVLSMVLKGPTPAQGVPDVSNPFDVLEEFGKTLEDNVGEFINLITQSELPAKTRDWFSETFRKVKEKLRINS.

Residues 1 to 24 form the signal peptide; that stretch reads MRLFLSLLVVVLSMVLKGPTPAQG.

Belongs to the apolipoprotein C1 family.

The protein localises to the secreted. This chain is Apolipoprotein C-I, acidic form (APOC1A), found in Macaca fascicularis (Crab-eating macaque).